The chain runs to 278 residues: Putative peptidase Cgl1093 (278 aa).

Positions 1-32 are cleaved as a signal peptide; the sequence is MSSASFTTKALSVLAALTAASAPLVAASPAHA. The 204-residue stretch at 33 to 236 folds into the Peptidase S1 domain; that stretch reads LANARNVTGS…HAEWIAYYTG (204 aa). A disulfide bridge links Cys-59 with Cys-75. Catalysis depends on charge relay system residues His-74, Asp-123, and Ser-189.

Belongs to the peptidase S1 family.

It localises to the secreted. This Corynebacterium glutamicum (strain ATCC 13032 / DSM 20300 / JCM 1318 / BCRC 11384 / CCUG 27702 / LMG 3730 / NBRC 12168 / NCIMB 10025 / NRRL B-2784 / 534) protein is Putative peptidase Cgl1093.